We begin with the raw amino-acid sequence, 250 residues long: Tetrathionate reductase subunit B (250 aa).

Residues 1–33 (MWTGVNMDSSKRQFLQQLGVLTAGASLVPLAEA) constitute a signal peptide (tat-type signal). 4Fe-4S ferredoxin-type domains lie at 50–79 (YAMLIDLRRCIGCQSCTVSCTIENQTPQGA), 97–128 (VTNVLLPRLCNHCDNPPCVPVCPVQATFQRED), and 129–158 (GIVVVDNKRCVGCAYCVQACPYDARFINHE). [4Fe-4S] cluster contacts are provided by cysteine 59, cysteine 62, cysteine 65, cysteine 69, cysteine 106, cysteine 109, cysteine 114, cysteine 118, cysteine 138, cysteine 141, cysteine 144, cysteine 148, cysteine 165, cysteine 168, cysteine 180, and cysteine 184.

As to quaternary structure, probably composed of three subunits: TtrA, TtrB and TtrC. In terms of processing, predicted to be exported by the Tat system. The position of the signal peptide cleavage has not been experimentally proven.

The protein localises to the periplasm. Its subcellular location is the cell inner membrane. Part of a membrane-bound tetrathionate reductase that catalyzes the reduction of tetrathionate to thiosulfate. TtrB is probably involved in transfer of electrons from TtrC to TtrA. During mice infection, the ability to use tetrathionate as an electron acceptor is a growth advantage for S.typhimurium over the competing microbiota in the lumen of the inflamed gut. The polypeptide is Tetrathionate reductase subunit B (ttrB) (Salmonella typhimurium (strain LT2 / SGSC1412 / ATCC 700720)).